The primary structure comprises 742 residues: Non-structural protein 1 (742 aa).

Disordered regions lie at residues 14 to 46 (SAMSNHPSLTPTTTPTAATASTSTAPSIDSSTA) and 230 to 268 (LMSLPIASPPRSRSSTLSSSTSTSTPRLPGTVVPRRPSH). Low complexity-rich tracts occupy residues 20 to 46 (PSLTPTTTPTAATASTSTAPSIDSSTA) and 238 to 258 (PPRSRSSTLSSSTSTSTPRLP). Positions 635-700 (DLTAQLAIAE…HSAATAEAAA (66 aa)) form a coiled coil.

It belongs to the aquareoviridae NS1 protein family.

In terms of biological role, non-structural protein with ssRNA-binding activity. Is probably involved in the formation of viral inclusions, where the assembly of cores and the replication of viral RNA are thought to occur. The polypeptide is Non-structural protein 1 (S4) (Aquareovirus C (isolate Golden shiner/USA/GSRV/1977) (AQRV-C)).